The sequence spans 147 residues: Hemoglobin subunit delta (147 aa).

V2 carries the post-translational modification N-acetylalanine; in variant Niigata. The Globin domain occupies 3–147; the sequence is HLTPEEKTAV…VANALAHKYH (145 aa). Position 51 is a phosphoserine (S51). The heme b site is built by H64 and H93.

The protein belongs to the globin family. As to quaternary structure, heterotetramer of two alpha chains and two delta chains in adult hemoglobin A2 (HbA2). HbA2 represents less than 3.5% of adult hemoglobin. As to expression, red blood cells.

Involved in oxygen transport from the lung to the various peripheral tissues. This Homo sapiens (Human) protein is Hemoglobin subunit delta (HBD).